Consider the following 406-residue polypeptide: Haptoglobin (406 aa).

An N-terminal signal peptide occupies residues Met-1–Ala-18. Sushi domains are found at residues Asp-31–Ala-88 and Asp-90–Ala-147. Cystine bridges form between Cys-52–Cys-86, Cys-111–Cys-145, Cys-149–Cys-266, Cys-309–Cys-340, and Cys-351–Cys-381. The Peptidase S1 domain occupies Ile-162–Ala-404. An N-linked (GlcNAc...) (complex) asparagine glycan is attached at Asn-184. N-linked (GlcNAc...) asparagine glycans are attached at residues Asn-207 and Asn-211. Asn-241 carries an N-linked (GlcNAc...) (complex) asparagine glycan. The interval Val-318 to Thr-323 is interaction with CD163.

Belongs to the peptidase S1 family. In terms of assembly, tetramer of two alpha and two beta chains; disulfide-linked. The hemoglobin/haptoglobin complex is composed of a haptoglobin dimer bound to two hemoglobin alpha-beta dimers. Interacts with CD163. Interacts with ERGIC3. In terms of tissue distribution, expressed by the liver and secreted in plasma.

The protein resides in the secreted. Its function is as follows. As a result of hemolysis, hemoglobin is found to accumulate in the kidney and is secreted in the urine. Haptoglobin captures, and combines with free plasma hemoglobin to allow hepatic recycling of heme iron and to prevent kidney damage. Haptoglobin also acts as an antioxidant, has antibacterial activity, and plays a role in modulating many aspects of the acute phase response. Hemoglobin/haptoglobin complexes are rapidly cleared by the macrophage CD163 scavenger receptor expressed on the surface of liver Kupfer cells through an endocytic lysosomal degradation pathway. The uncleaved form of allele alpha-2 (2-2), known as zonulin, plays a role in intestinal permeability, allowing intercellular tight junction disassembly, and controlling the equilibrium between tolerance and immunity to non-self antigens. In Homo sapiens (Human), this protein is Haptoglobin (HP).